A 562-amino-acid chain; its full sequence is TBC1 domain family member 24 (562 aa).

Residues lysine 36, arginine 40, lysine 238, arginine 242, and 293–297 (RLFSR) each bind a 1,2-diacyl-sn-glycero-3-phospho-(1D-myo-inositol). The region spanning 42-259 (GHWAKSHTLR…FFHKVRGGQP (218 aa)) is the Rab-GAP TBC domain. In terms of domain architecture, TLDc spans 337–549 (EIVSVKEMRD…ISIIEVWGFK (213 aa)). Residues 450–471 (NSSSADKEANSSQSDKDGIDPS) form a disordered region. Positions 454–468 (ADKEANSSQSDKDGI) are enriched in basic and acidic residues.

Interacts with ARF6.

It is found in the cell membrane. The protein localises to the cytoplasm. The protein resides in the cytoplasmic vesicle membrane. Its subcellular location is the presynapse. May act as a GTPase-activating protein for Rab family protein(s). Involved in neuronal projections development, probably through a negative modulation of ARF6 function. Involved in the regulation of synaptic vesicle trafficking. The sequence is that of TBC1 domain family member 24 (tbc1d24) from Xenopus laevis (African clawed frog).